We begin with the raw amino-acid sequence, 320 residues long: Nucleotide-binding protein Pcryo_0127 (320 aa).

32–39 contacts ATP; it reads GRSGSGKT. Residue 82–85 coordinates GTP; it reads DIRT.

Belongs to the RapZ-like family.

Functionally, displays ATPase and GTPase activities. This chain is Nucleotide-binding protein Pcryo_0127, found in Psychrobacter cryohalolentis (strain ATCC BAA-1226 / DSM 17306 / VKM B-2378 / K5).